A 193-amino-acid chain; its full sequence is Hypoxanthine/guanine phosphoribosyltransferase (193 aa).

It belongs to the purine/pyrimidine phosphoribosyltransferase family. Archaeal HPRT subfamily. As to quaternary structure, homodimer.

Its subcellular location is the cytoplasm. The catalysed reaction is IMP + diphosphate = hypoxanthine + 5-phospho-alpha-D-ribose 1-diphosphate. It carries out the reaction GMP + diphosphate = guanine + 5-phospho-alpha-D-ribose 1-diphosphate. It functions in the pathway purine metabolism; IMP biosynthesis via salvage pathway; IMP from hypoxanthine: step 1/1. Catalyzes a salvage reaction resulting in the formation of IMP that is energically less costly than de novo synthesis. This chain is Hypoxanthine/guanine phosphoribosyltransferase, found in Methanothermobacter thermautotrophicus (strain ATCC 29096 / DSM 1053 / JCM 10044 / NBRC 100330 / Delta H) (Methanobacterium thermoautotrophicum).